Reading from the N-terminus, the 249-residue chain is Small ribosomal subunit protein uS3 (249 aa).

Residues 38-106 (IRDFLSKGLE…QVQLNILEVK (69 aa)) form the KH type-2 domain. Over residues 218-233 (ARDDRGSRRGRNDRPR) the composition is skewed to basic and acidic residues. The segment at 218–249 (ARDDRGSRRGRNDRPRRGGGRRRRAAEQKQEG) is disordered.

Belongs to the universal ribosomal protein uS3 family. In terms of assembly, part of the 30S ribosomal subunit. Forms a tight complex with proteins S10 and S14.

Its function is as follows. Binds the lower part of the 30S subunit head. Binds mRNA in the 70S ribosome, positioning it for translation. The chain is Small ribosomal subunit protein uS3 from Corynebacterium kroppenstedtii (strain DSM 44385 / JCM 11950 / CIP 105744 / CCUG 35717).